Consider the following 447-residue polypeptide: Dihydrolipoyllysine-residue acetyltransferase component of pyruvate dehydrogenase complex (447 aa).

One can recognise a Lipoyl-binding domain in the interval proline 2–alanine 78. Lysine 43 carries the post-translational modification N6-lipoyllysine. Residues glycine 91 to arginine 140 form a disordered region. Low complexity predominate over residues glutamate 108 to alanine 134. The region spanning phenylalanine 142–valine 179 is the Peripheral subunit-binding (PSBD) domain. Histidine 420 is an active-site residue.

The protein belongs to the 2-oxoacid dehydrogenase family. In terms of assembly, forms a 24-polypeptide structural core with octahedral symmetry. It depends on (R)-lipoate as a cofactor.

The catalysed reaction is N(6)-[(R)-dihydrolipoyl]-L-lysyl-[protein] + acetyl-CoA = N(6)-[(R)-S(8)-acetyldihydrolipoyl]-L-lysyl-[protein] + CoA. Its function is as follows. The pyruvate dehydrogenase complex catalyzes the overall conversion of pyruvate to acetyl-CoA and CO(2). It contains multiple copies of three enzymatic components: pyruvate dehydrogenase (E1), dihydrolipoamide acetyltransferase (E2) and lipoamide dehydrogenase (E3). This chain is Dihydrolipoyllysine-residue acetyltransferase component of pyruvate dehydrogenase complex (pdhC), found in Rhizobium meliloti (strain 1021) (Ensifer meliloti).